Here is a 136-residue protein sequence, read N- to C-terminus: Small ribosomal subunit protein uS9 (136 aa).

Belongs to the universal ribosomal protein uS9 family.

The sequence is that of Small ribosomal subunit protein uS9 from Borrelia recurrentis (strain A1).